The chain runs to 285 residues: Ribonuclease H1 (285 aa).

Residues 72 to 126 form a disordered region; it reads RSSSSPDGSKGQESAHEQKSQAKTSKRPREPLGEGEELPEPGPKHTRQDTEPAAV. An RNase H type-1 domain is found at 135 to 281; sequence MGESVIVYTD…ADRLAREGAK (147 aa). Positions 144, 185, 209, and 273 each coordinate Mg(2+).

The protein belongs to the RNase H family. As to quaternary structure, monomer. Mg(2+) is required as a cofactor.

Its subcellular location is the cytoplasm. The catalysed reaction is Endonucleolytic cleavage to 5'-phosphomonoester.. In the presence of magnesium, manganese is inhibitory. In terms of biological role, endonuclease that specifically degrades the RNA of RNA-DNA hybrids. Plays a role in RNA polymerase II (RNAp II) transcription termination by degrading R-loop RNA-DNA hybrid formation at G-rich pause sites located downstream of the poly(A) site and behind the elongating RNAp II. This is Ribonuclease H1 (Rnaseh1) from Mus musculus (Mouse).